A 367-amino-acid polypeptide reads, in one-letter code: Putative isomerase YraM (367 aa).

Belongs to the PrpF family.

The protein is Putative isomerase YraM (yraM) of Bacillus subtilis (strain 168).